Consider the following 266-residue polypeptide: Undecaprenyl-diphosphatase (266 aa).

A run of 8 helical transmembrane segments spans residues 1-21 (MTWLEIVVLALIQGLTEFLPI), 39-59 (QGLAFDVAVHVGTLLAVMVYF), 87-107 (WAVILGTIPACVAGLLLDSWI), 111-131 (LRSALVIALTTIGFGVLLGMA), 143-163 (FTLKDALIIGVSQALALIPGT), 186-206 (FSFLLSIPLIAAAGLFKGLEL), 217-237 (EIAGATLISAVSAYACIHLFL), and 243-263 (IGFMPFVIYRMLLGAGLLVWL).

It belongs to the UppP family.

The protein localises to the cell inner membrane. It catalyses the reaction di-trans,octa-cis-undecaprenyl diphosphate + H2O = di-trans,octa-cis-undecaprenyl phosphate + phosphate + H(+). Its function is as follows. Catalyzes the dephosphorylation of undecaprenyl diphosphate (UPP). Confers resistance to bacitracin. This Hahella chejuensis (strain KCTC 2396) protein is Undecaprenyl-diphosphatase.